The sequence spans 113 residues: Large ribosomal subunit protein bL17 (113 aa).

The protein belongs to the bacterial ribosomal protein bL17 family. In terms of assembly, part of the 50S ribosomal subunit. Contacts protein L32.

This is Large ribosomal subunit protein bL17 from Clostridium botulinum (strain ATCC 19397 / Type A).